Consider the following 99-residue polypeptide: UPF0213 protein spr1390 (99 aa).

Residues 3–78 (HKAYMYVLEC…KRKKRPQKEE (76 aa)) form the GIY-YIG domain.

It belongs to the UPF0213 family.

This chain is UPF0213 protein spr1390, found in Streptococcus pneumoniae (strain ATCC BAA-255 / R6).